The following is an 85-amino-acid chain: UPF0335 protein Oant_1161 (85 aa).

This sequence belongs to the UPF0335 family.

The chain is UPF0335 protein Oant_1161 from Brucella anthropi (strain ATCC 49188 / DSM 6882 / CCUG 24695 / JCM 21032 / LMG 3331 / NBRC 15819 / NCTC 12168 / Alc 37) (Ochrobactrum anthropi).